Consider the following 547-residue polypeptide: Trigger factor-like protein TIG, Chloroplastic (547 aa).

The transit peptide at 1-77 directs the protein to the chloroplast; that stretch reads MELCVISTTT…SHGGNFRLFA (77 aa). Ala-78 is subject to N-acetylalanine. One can recognise a PPIase FKBP-type domain in the interval 271–366; it reads GDLAVVDISA…LFYRDLPTLD (96 aa).

This sequence belongs to the FKBP-type PPIase family. Tig subfamily.

It is found in the plastid. It localises to the chloroplast. It catalyses the reaction [protein]-peptidylproline (omega=180) = [protein]-peptidylproline (omega=0). Its function is as follows. Involved in protein export. Acts as a chaperone by maintaining the newly synthesized protein in an open conformation. Functions as a peptidyl-prolyl cis-trans isomerase. In Arabidopsis thaliana (Mouse-ear cress), this protein is Trigger factor-like protein TIG, Chloroplastic (TIG).